We begin with the raw amino-acid sequence, 1106 residues long: Exportin-T (1106 aa).

The segment at 336–357 (TPLESRTRTGPSAQNGQSDTSD) is disordered. Residues 343 to 357 (RTGPSAQNGQSDTSD) show a composition bias toward polar residues.

The protein belongs to the exportin family.

It localises to the nucleus. The protein localises to the cytoplasm. In terms of biological role, tRNA nucleus export receptor which facilitates tRNA translocation across the nuclear pore complex. Involved in pre-tRNA splicing, probably by affecting the interaction of pre-tRNA with splicing endonuclease. In Mycosarcoma maydis (Corn smut fungus), this protein is Exportin-T (LOS1).